We begin with the raw amino-acid sequence, 228 residues long: L-ribulose-5-phosphate 4-epimerase (228 aa).

Substrate contacts are provided by residues 27 to 28 (GN), 44 to 45 (SG), and 73 to 74 (SS). Positions 75, 94, and 96 each coordinate Zn(2+). Residue aspartate 119 is the Proton donor/acceptor of the active site. Histidine 168 contributes to the Zn(2+) binding site. Tyrosine 226 acts as the Proton donor/acceptor in catalysis.

It belongs to the aldolase class II family. AraD/FucA subfamily. Zn(2+) serves as cofactor.

The enzyme catalyses L-ribulose 5-phosphate = D-xylulose 5-phosphate. Its pathway is carbohydrate degradation; L-arabinose degradation via L-ribulose; D-xylulose 5-phosphate from L-arabinose (bacterial route): step 3/3. In terms of biological role, involved in the degradation of L-arabinose. Catalyzes the interconversion of L-ribulose 5-phosphate (LRu5P) and D-xylulose 5-phosphate (D-Xu5P) via a retroaldol/aldol mechanism (carbon-carbon bond cleavage analogous to a class II aldolase reaction). The protein is L-ribulose-5-phosphate 4-epimerase (araD) of Geobacillus stearothermophilus (Bacillus stearothermophilus).